Here is a 458-residue protein sequence, read N- to C-terminus: ATP synthase subunit beta (458 aa).

Position 148–155 (148–155) interacts with ATP; the sequence is GGAGVGKT.

This sequence belongs to the ATPase alpha/beta chains family. In terms of assembly, F-type ATPases have 2 components, CF(1) - the catalytic core - and CF(0) - the membrane proton channel. CF(1) has five subunits: alpha(3), beta(3), gamma(1), delta(1), epsilon(1). CF(0) has three main subunits: a(1), b(2) and c(9-12). The alpha and beta chains form an alternating ring which encloses part of the gamma chain. CF(1) is attached to CF(0) by a central stalk formed by the gamma and epsilon chains, while a peripheral stalk is formed by the delta and b chains.

The protein resides in the cell inner membrane. It catalyses the reaction ATP + H2O + 4 H(+)(in) = ADP + phosphate + 5 H(+)(out). Its function is as follows. Produces ATP from ADP in the presence of a proton gradient across the membrane. The catalytic sites are hosted primarily by the beta subunits. The chain is ATP synthase subunit beta from Halorhodospira halophila (strain DSM 244 / SL1) (Ectothiorhodospira halophila (strain DSM 244 / SL1)).